The following is a 1261-amino-acid chain: Apoptotic protease-activating factor 1 (1261 aa).

The 90-residue stretch at 1 to 90 (MEERARSRLL…GDLASLLHSD (90 aa)) folds into the CARD domain. The NB-ARC domain maps to 106–417 (VSPSVQAILS…LELEEVEDVL (312 aa)). Position 154–161 (154–161 (GMAGSGKS)) interacts with ATP. WD repeat units lie at residues 615-654 (PHQG…KLLE), 657-696 (AHEE…LIRE), 700-743 (EHEE…SQNT), 746-785 (GHME…EWKS), 798-836 (EIKA…LLLK), 840-879 (SRLS…KKAE), 882-921 (GHLS…TSSA), 964-1003 (ELSS…ASVK), 1006-1045 (GHTK…CMVL), 1047-1088 (GHME…MLQD), 1091-1130 (CHEG…MLFL), 1133-1172 (GHKD…LLKI), and 1184-1223 (YHAG…QTFY).

In terms of assembly, monomer. Oligomerizes upon binding of cytochrome c and dATP.

It localises to the cytoplasm. In terms of biological role, oligomeric Apaf-1 mediates the cytochrome c-dependent autocatalytic activation of pro-caspase-9 (Apaf-3), leading to the activation of caspase-3 and apoptosis. This activation requires ATP. In Danio rerio (Zebrafish), this protein is Apoptotic protease-activating factor 1 (apaf1).